The following is a 94-amino-acid chain: Small ribosomal subunit protein bS20 (94 aa).

Residues 1–10 show a composition bias toward basic and acidic residues; it reads MANHASADKR. Positions 1–20 are disordered; it reads MANHASADKRNRQRITRTAR. The span at 11–20 shows a compositional bias: basic residues; it reads NRQRITRTAR.

It belongs to the bacterial ribosomal protein bS20 family.

Binds directly to 16S ribosomal RNA. The sequence is that of Small ribosomal subunit protein bS20 from Sorangium cellulosum (strain So ce56) (Polyangium cellulosum (strain So ce56)).